A 306-amino-acid polypeptide reads, in one-letter code: Curved DNA-binding protein (306 aa).

The region spanning Asp-5–Trp-69 is the J domain.

It localises to the cytoplasm. The protein resides in the nucleoid. Functionally, DNA-binding protein that preferentially recognizes a curved DNA sequence. It is probably a functional analog of DnaJ; displays overlapping activities with DnaJ, but functions under different conditions, probably acting as a molecular chaperone in an adaptive response to environmental stresses other than heat shock. Lacks autonomous chaperone activity; binds native substrates and targets them for recognition by DnaK. Its activity is inhibited by the binding of CbpM. This is Curved DNA-binding protein from Escherichia coli O157:H7.